A 97-amino-acid polypeptide reads, in one-letter code: Nucleoid-associated protein HPAG1_0033 (97 aa).

Belongs to the YbaB/EbfC family. In terms of assembly, homodimer.

It is found in the cytoplasm. The protein resides in the nucleoid. Functionally, binds to DNA and alters its conformation. May be involved in regulation of gene expression, nucleoid organization and DNA protection. This Helicobacter pylori (strain HPAG1) protein is Nucleoid-associated protein HPAG1_0033.